The sequence spans 331 residues: MTIATKTPTTPETLDIFQAKAYSPYYFFSTEEWAKFRADTPLTLTADEVTRLRSMGDPIDLDEVRRIYLSLSRLLSSHVESSQILFEQRNRFLSLNGVAKTPFVIGIAGSVAVGKSTTARILKELLRRWPSSPKVDLITTDGFLYPNAELQRRNLMQRKGFPESYDTAALLRFLSAIKAGQPDVKAPCYSHLVYDVLPSEYKTVDRPDILIFEGINVLQSRHLPADGKIVPMVSDFFDFSIYIDADEDLIHNWYVTRFMRLRETAFRDPHSFFHRYASITEEEALGIAEGLWKNINLKNLRQNILPTRPRADLILRKGKNHLIEQVALRKL.

ATP is bound at residue 109 to 116 (GSVAVGKS).

The protein belongs to the prokaryotic pantothenate kinase family.

It localises to the cytoplasm. It catalyses the reaction (R)-pantothenate + ATP = (R)-4'-phosphopantothenate + ADP + H(+). It participates in cofactor biosynthesis; coenzyme A biosynthesis; CoA from (R)-pantothenate: step 1/5. This is Pantothenate kinase from Rhizobium rhizogenes (strain K84 / ATCC BAA-868) (Agrobacterium radiobacter).